Here is a 409-residue protein sequence, read N- to C-terminus: Elongation factor Tu (409 aa).

Residues 10-214 (KPHVNIGTIG…AVDSYIPDPE (205 aa)) enclose the tr-type G domain. The tract at residues 19–26 (GHVDHGKT) is G1. Residue 19–26 (GHVDHGKT) coordinates GTP. T26 provides a ligand contact to Mg(2+). Residues 60-64 (GITIN) form a G2 region. The tract at residues 81 to 84 (DCPG) is G3. GTP contacts are provided by residues 81–85 (DCPGH) and 136–139 (NKED). A G4 region spans residues 136–139 (NKED). The segment at 174 to 176 (SGL) is G5.

Belongs to the TRAFAC class translation factor GTPase superfamily. Classic translation factor GTPase family. EF-Tu/EF-1A subfamily. As to quaternary structure, monomer.

It is found in the cytoplasm. The catalysed reaction is GTP + H2O = GDP + phosphate + H(+). In terms of biological role, GTP hydrolase that promotes the GTP-dependent binding of aminoacyl-tRNA to the A-site of ribosomes during protein biosynthesis. This chain is Elongation factor Tu, found in Trichormus variabilis (strain ATCC 29413 / PCC 7937) (Anabaena variabilis).